Reading from the N-terminus, the 962-residue chain is Glycine dehydrogenase (decarboxylating) (962 aa).

Position 709 is an N6-(pyridoxal phosphate)lysine (Lys-709).

It belongs to the GcvP family. The glycine cleavage system is composed of four proteins: P, T, L and H. Pyridoxal 5'-phosphate is required as a cofactor.

It catalyses the reaction N(6)-[(R)-lipoyl]-L-lysyl-[glycine-cleavage complex H protein] + glycine + H(+) = N(6)-[(R)-S(8)-aminomethyldihydrolipoyl]-L-lysyl-[glycine-cleavage complex H protein] + CO2. In terms of biological role, the glycine cleavage system catalyzes the degradation of glycine. The P protein binds the alpha-amino group of glycine through its pyridoxal phosphate cofactor; CO(2) is released and the remaining methylamine moiety is then transferred to the lipoamide cofactor of the H protein. This is Glycine dehydrogenase (decarboxylating) from Shewanella frigidimarina (strain NCIMB 400).